The chain runs to 513 residues: ATP synthase subunit alpha (513 aa).

169 to 176 contributes to the ATP binding site; it reads GDRQCGKT.

It belongs to the ATPase alpha/beta chains family. In terms of assembly, F-type ATPases have 2 components, CF(1) - the catalytic core - and CF(0) - the membrane proton channel. CF(1) has five subunits: alpha(3), beta(3), gamma(1), delta(1), epsilon(1). CF(0) has three main subunits: a(1), b(2) and c(9-12). The alpha and beta chains form an alternating ring which encloses part of the gamma chain. CF(1) is attached to CF(0) by a central stalk formed by the gamma and epsilon chains, while a peripheral stalk is formed by the delta and b chains.

It localises to the cell inner membrane. The enzyme catalyses ATP + H2O + 4 H(+)(in) = ADP + phosphate + 5 H(+)(out). Its function is as follows. Produces ATP from ADP in the presence of a proton gradient across the membrane. The alpha chain is a regulatory subunit. This is ATP synthase subunit alpha from Burkholderia mallei (strain NCTC 10229).